Consider the following 470-residue polypeptide: 63 kDa sperm flagellar membrane protein (470 aa).

The N-terminal stretch at 1-25 (MFCHLHCMLVVFSLLLTLTGSFVNA) is a signal peptide. Positions 41–80 (PPDPCASNPCTIASTHCVAAGESHTCECRPGYFETNGNCT) constitute an EGF-like 1 domain. Intrachain disulfides connect cysteine 45–cysteine 57, cysteine 50–cysteine 66, and cysteine 68–cysteine 79. N-linked (GlcNAc...) asparagine glycans are attached at residues asparagine 78, asparagine 170, and asparagine 219. The 125-residue stretch at 81-205 (VAQQFAGSFS…STITVSDFDE (125 aa)) folds into the SEA domain. In terms of domain architecture, EGF-like 2; calcium-binding spans 202-250 (DFDECASADDNDCDPNANCTNTAGSFTCECDTELYDNSPNTEEPGRVCI). 6 cysteine pairs are disulfide-bonded: cysteine 206–cysteine 220, cysteine 214–cysteine 229, cysteine 231–cysteine 249, cysteine 253–cysteine 265, cysteine 258–cysteine 277, and cysteine 279–cysteine 291. An EGF-like 3 domain is found at 249–292 (CIAPCDPGLCTRPNEICNNGGTIEDDNLCKCIEGYDYTQYGDCD). N-linked (GlcNAc...) asparagine glycosylation occurs at asparagine 322. Glycine 446 carries the GPI-anchor amidated glycine lipid modification. Positions 447–470 (SQRHLPVCGVLSLVVTTLLALMLH) are cleaved as a propeptide — removed in mature form.

In terms of tissue distribution, sperm.

Its subcellular location is the cell projection. It is found in the cilium. The protein resides in the flagellum membrane. The polypeptide is 63 kDa sperm flagellar membrane protein (Strongylocentrotus purpuratus (Purple sea urchin)).